The chain runs to 366 residues: uncharacterized protein (366 aa).

A run of 6 helical transmembrane segments spans residues 164–184, 188–208, 223–243, 256–276, 299–319, and 325–345; these read IPLILTFIGFSLILYAIFADI, IVVGIIGLYILSEGVGVRKLL, VFPISASISIFILIIGLIYSL, FIGEFLLHFVDSLTLSLLILM, FFCLICIFISRELIISGGEYL, and FIMFVMCVIIYISIVIILSVI.

To A.fulgidus AF2058.

The protein localises to the cell membrane. This is an uncharacterized protein from Methanocaldococcus jannaschii (strain ATCC 43067 / DSM 2661 / JAL-1 / JCM 10045 / NBRC 100440) (Methanococcus jannaschii).